The chain runs to 418 residues: Magnesium-chelatase subunit ChlI-2, chloroplastic (418 aa).

The transit peptide at 1–55 directs the protein to the chloroplast; the sequence is MASLLGRSPSSILTCPRISSPSSTSSMSHLCFGPEKLSGRIQFNPKKNRSRYHVS. N-acetylvaline is present on Val-56. Cystine bridges form between Cys-96–Cys-187 and Cys-348–Cys-390. An ATP-binding site is contributed by 113–120; it reads GDRGTGKS.

It belongs to the Mg-chelatase subunits D/I family. The magnesium chelatase complex is a heterotrimer consisting of subunits CHLI, CHLD and CHLH. As to expression, expressed in leaves.

Its subcellular location is the plastid. It localises to the chloroplast. The enzyme catalyses protoporphyrin IX + Mg(2+) + ATP + H2O = Mg-protoporphyrin IX + ADP + phosphate + 3 H(+). Its pathway is porphyrin-containing compound metabolism; chlorophyll biosynthesis. With respect to regulation, redox regulation; active in reducing conditions, inactive in oxidizing conditions. Thioredoxins f and m mediate the reversible reductive activation of oxidized CHLI2. In terms of biological role, involved in chlorophyll biosynthesis. Catalyzes the insertion of magnesium ion into protoporphyrin IX to yield Mg-protoporphyrin IX. The reaction takes place in two steps, with an ATP-dependent activation followed by an ATP-dependent chelation step. Possesses low affinity for ATP and may play a limited role in chlorophyll biosynthesis, and contributes to the assembly of the Mg-chelatase complex. The sequence is that of Magnesium-chelatase subunit ChlI-2, chloroplastic (CHLI2) from Arabidopsis thaliana (Mouse-ear cress).